A 937-amino-acid chain; its full sequence is DNA mismatch repair protein msh-2 (937 aa).

Residue 659–666 (GPNMGGKS) participates in ATP binding.

Belongs to the DNA mismatch repair MutS family. As to quaternary structure, heterodimer of msh2 and msh6.

The protein localises to the nucleus. Involved in post-replicative DNA-mismatch repair. Binds to mismatch-containing DNA. This Neurospora crassa (strain ATCC 24698 / 74-OR23-1A / CBS 708.71 / DSM 1257 / FGSC 987) protein is DNA mismatch repair protein msh-2 (msh-2).